The sequence spans 102 residues: Large ribosomal subunit protein bL21 (102 aa).

Positions 77–88 are enriched in basic residues; that stretch reads KPKKHTHTKQGH. Residues 77 to 102 form a disordered region; it reads KPKKHTHTKQGHRQPYTKVTINKINA. The span at 93 to 102 shows a compositional bias: polar residues; the sequence is TKVTINKINA.

It belongs to the bacterial ribosomal protein bL21 family. Part of the 50S ribosomal subunit. Contacts protein L20.

In terms of biological role, this protein binds to 23S rRNA in the presence of protein L20. The polypeptide is Large ribosomal subunit protein bL21 (Limosilactobacillus reuteri (strain DSM 20016) (Lactobacillus reuteri)).